Consider the following 359-residue polypeptide: Biotin synthase (359 aa).

The tract at residues 1 to 23 (MSVADSSAADSVAAPDTADTSSS) is disordered. Residues 76–302 (YFGNTVQLYF…VNPDRELRIA (227 aa)) form the Radical SAM core domain. Residues cysteine 94, cysteine 98, and cysteine 101 each contribute to the [4Fe-4S] cluster site. The [2Fe-2S] cluster site is built by cysteine 138, cysteine 170, cysteine 230, and arginine 300.

It belongs to the radical SAM superfamily. Biotin synthase family. In terms of assembly, homodimer. Requires [4Fe-4S] cluster as cofactor. [2Fe-2S] cluster serves as cofactor.

The catalysed reaction is (4R,5S)-dethiobiotin + (sulfur carrier)-SH + 2 reduced [2Fe-2S]-[ferredoxin] + 2 S-adenosyl-L-methionine = (sulfur carrier)-H + biotin + 2 5'-deoxyadenosine + 2 L-methionine + 2 oxidized [2Fe-2S]-[ferredoxin]. It functions in the pathway cofactor biosynthesis; biotin biosynthesis; biotin from 7,8-diaminononanoate: step 2/2. Catalyzes the conversion of dethiobiotin (DTB) to biotin by the insertion of a sulfur atom into dethiobiotin via a radical-based mechanism. The polypeptide is Biotin synthase (Rhodopirellula baltica (strain DSM 10527 / NCIMB 13988 / SH1)).